A 178-amino-acid chain; its full sequence is Protein GrpE (178 aa).

Positions 1–11 (MAEDQAPREET) are enriched in basic and acidic residues. Residues 1–30 (MAEDQAPREETVEAPELTEAPEIDELETLR) form a disordered region.

Belongs to the GrpE family. Homodimer.

Its subcellular location is the cytoplasm. In terms of biological role, participates actively in the response to hyperosmotic and heat shock by preventing the aggregation of stress-denatured proteins, in association with DnaK and GrpE. It is the nucleotide exchange factor for DnaK and may function as a thermosensor. Unfolded proteins bind initially to DnaJ; upon interaction with the DnaJ-bound protein, DnaK hydrolyzes its bound ATP, resulting in the formation of a stable complex. GrpE releases ADP from DnaK; ATP binding to DnaK triggers the release of the substrate protein, thus completing the reaction cycle. Several rounds of ATP-dependent interactions between DnaJ, DnaK and GrpE are required for fully efficient folding. This Cereibacter sphaeroides (strain ATCC 17023 / DSM 158 / JCM 6121 / CCUG 31486 / LMG 2827 / NBRC 12203 / NCIMB 8253 / ATH 2.4.1.) (Rhodobacter sphaeroides) protein is Protein GrpE.